A 209-amino-acid chain; its full sequence is Ion-translocating oxidoreductase complex subunit G (209 aa).

A helical membrane pass occupies residues 9 to 29 (ATTLALFAASTTAVTAVVNML). An FMN phosphoryl threonine modification is found at Thr175.

It belongs to the RnfG family. The complex is composed of six subunits: RnfA, RnfB, RnfC, RnfD, RnfE and RnfG. Requires FMN as cofactor.

Its subcellular location is the cell inner membrane. Functionally, part of a membrane-bound complex that couples electron transfer with translocation of ions across the membrane. The sequence is that of Ion-translocating oxidoreductase complex subunit G from Pectobacterium atrosepticum (strain SCRI 1043 / ATCC BAA-672) (Erwinia carotovora subsp. atroseptica).